A 413-amino-acid polypeptide reads, in one-letter code: Variant surface glycoprotein YnAT 1.3 (413 aa).

Residues 1–22 form the signal peptide; the sequence is MLDNSRARSIVHLLILLKAHVI. N-linked (GlcNAc...) asparagine glycosylation is found at Asn91, Asn361, and Asn379. The GPI-anchor amidated asparagine moiety is linked to residue Asn379. The propeptide at 380-413 is removed in mature form; that stretch reads SSNPTSRQNSVVQEPTTVSAAAITPLILPWTLLI.

Its subcellular location is the cell membrane. VSG forms a coat on the surface of the parasite. The trypanosome evades the immune response of the host by expressing a series of antigenically distinct VSGs from an estimated 1000 VSG genes. This Trypanosoma congolense protein is Variant surface glycoprotein YnAT 1.3.